The chain runs to 419 residues: GTPase Obg (419 aa).

One can recognise an Obg domain in the interval Met1–Met156. The 178-residue stretch at Ala157–Ile334 folds into the OBG-type G domain. Residues Gly163 to Ser170, Phe188 to Ala192, Asp209 to Gly212, Asn278 to Asp281, and Asn315 to Ile317 each bind GTP. Mg(2+) is bound by residues Ser170 and Thr190. An OCT domain is found at Ile342–Asn419.

It belongs to the TRAFAC class OBG-HflX-like GTPase superfamily. OBG GTPase family. In terms of assembly, monomer. Mg(2+) is required as a cofactor.

The protein resides in the cytoplasm. Its function is as follows. An essential GTPase which binds GTP, GDP and possibly (p)ppGpp with moderate affinity, with high nucleotide exchange rates and a fairly low GTP hydrolysis rate. Plays a role in control of the cell cycle, stress response, ribosome biogenesis and in those bacteria that undergo differentiation, in morphogenesis control. This chain is GTPase Obg, found in Mesomycoplasma hyopneumoniae (strain J / ATCC 25934 / NCTC 10110) (Mycoplasma hyopneumoniae).